Here is a 365-residue protein sequence, read N- to C-terminus: Chorismate synthase (365 aa).

Position 48 (Arg48) interacts with NADP(+). Residues 130–132, 242–243, Gly290, 305–309, and Arg331 contribute to the FMN site; these read RSS, NA, and KPTSS.

Belongs to the chorismate synthase family. Homotetramer. FMNH2 serves as cofactor.

The catalysed reaction is 5-O-(1-carboxyvinyl)-3-phosphoshikimate = chorismate + phosphate. The protein operates within metabolic intermediate biosynthesis; chorismate biosynthesis; chorismate from D-erythrose 4-phosphate and phosphoenolpyruvate: step 7/7. Its function is as follows. Catalyzes the anti-1,4-elimination of the C-3 phosphate and the C-6 proR hydrogen from 5-enolpyruvylshikimate-3-phosphate (EPSP) to yield chorismate, which is the branch point compound that serves as the starting substrate for the three terminal pathways of aromatic amino acid biosynthesis. This reaction introduces a second double bond into the aromatic ring system. This Erythrobacter litoralis (strain HTCC2594) protein is Chorismate synthase.